We begin with the raw amino-acid sequence, 204 residues long: Somatotropin (204 aa).

The N-terminal stretch at 1 to 17 (MDRVVLMLSVMSLGVSS) is a signal peptide. Q18 carries the post-translational modification Pyrrolidone carboxylic acid. H36 lines the Zn(2+) pocket. A disulfide bridge connects residues C69 and C177. E186 serves as a coordination point for Zn(2+). A disulfide bridge connects residues C194 and C202.

Belongs to the somatotropin/prolactin family.

The protein resides in the secreted. Its function is as follows. Growth hormone plays an important role in growth control and is involved in the regulation of several anabolic processes. Implicated as an osmoregulatory substance important for seawater adaptation. This is Somatotropin (gh) from Sparus aurata (Gilthead sea bream).